A 249-amino-acid chain; its full sequence is Large ribosomal subunit protein uL1 (249 aa).

Belongs to the universal ribosomal protein uL1 family. As to quaternary structure, part of the 50S ribosomal subunit.

In terms of biological role, binds directly to 23S rRNA. The L1 stalk is quite mobile in the ribosome, and is involved in E site tRNA release. Protein L1 is also a translational repressor protein, it controls the translation of the L11 operon by binding to its mRNA. The polypeptide is Large ribosomal subunit protein uL1 (Orientia tsutsugamushi (strain Ikeda) (Rickettsia tsutsugamushi)).